A 294-amino-acid polypeptide reads, in one-letter code: 33 kDa chaperonin (294 aa).

Intrachain disulfides connect cysteine 239-cysteine 241 and cysteine 272-cysteine 275.

Belongs to the HSP33 family. In terms of processing, under oxidizing conditions two disulfide bonds are formed involving the reactive cysteines. Under reducing conditions zinc is bound to the reactive cysteines and the protein is inactive.

The protein localises to the cytoplasm. In terms of biological role, redox regulated molecular chaperone. Protects both thermally unfolding and oxidatively damaged proteins from irreversible aggregation. Plays an important role in the bacterial defense system toward oxidative stress. The sequence is that of 33 kDa chaperonin from Listeria monocytogenes serovar 1/2a (strain ATCC BAA-679 / EGD-e).